Reading from the N-terminus, the 320-residue chain is Cytochrome f (320 aa).

Residues 1–35 form the signal peptide; the sequence is MEKRNTYDWVTRWVIASFSILTISYMITWTSISNA. Residues Tyr-36, Cys-56, Cys-59, and His-60 each contribute to the heme site. A helical membrane pass occupies residues 286–306; sequence IQGLLVFLASVVLAQIFLVLK.

The protein belongs to the cytochrome f family. In terms of assembly, the 4 large subunits of the cytochrome b6-f complex are cytochrome b6, subunit IV (17 kDa polypeptide, petD), cytochrome f and the Rieske protein, while the 4 small subunits are PetG, PetL, PetM and PetN. The complex functions as a dimer. Heme serves as cofactor.

The protein localises to the plastid. The protein resides in the chloroplast thylakoid membrane. In terms of biological role, component of the cytochrome b6-f complex, which mediates electron transfer between photosystem II (PSII) and photosystem I (PSI), cyclic electron flow around PSI, and state transitions. The protein is Cytochrome f of Welwitschia mirabilis (Tree tumbo).